A 345-amino-acid chain; its full sequence is Hemin transport protein HmuS (345 aa).

The protein to Y.enterocolitica HemS.

Its function is as follows. Part of the binding-protein-dependent transport system for hemin. The protein is Hemin transport protein HmuS (hmuS) of Yersinia pestis.